The primary structure comprises 58 residues: MTQVTVGENEGIESALRRFKRQVSKSGIFADLKRLRHHETPIEKYKRKLQQRRKARRR.

Belongs to the bacterial ribosomal protein bS21 family.

This Prochlorococcus marinus (strain MIT 9515) protein is Small ribosomal subunit protein bS21.